A 427-amino-acid polypeptide reads, in one-letter code: Glutamate-1-semialdehyde 2,1-aminomutase (427 aa).

At lysine 265 the chain carries N6-(pyridoxal phosphate)lysine.

This sequence belongs to the class-III pyridoxal-phosphate-dependent aminotransferase family. HemL subfamily. Homodimer. Requires pyridoxal 5'-phosphate as cofactor.

The protein resides in the cytoplasm. It carries out the reaction (S)-4-amino-5-oxopentanoate = 5-aminolevulinate. It participates in porphyrin-containing compound metabolism; protoporphyrin-IX biosynthesis; 5-aminolevulinate from L-glutamyl-tRNA(Glu): step 2/2. The protein is Glutamate-1-semialdehyde 2,1-aminomutase of Bordetella pertussis (strain Tohama I / ATCC BAA-589 / NCTC 13251).